Here is a 615-residue protein sequence, read N- to C-terminus: tRNA uridine 5-carboxymethylaminomethyl modification enzyme MnmG (615 aa).

11-16 contributes to the FAD binding site; sequence GLGHAG. Position 278 to 292 (278 to 292) interacts with NAD(+); sequence GPRYCPSLEDKVVRF.

This sequence belongs to the MnmG family. As to quaternary structure, homodimer. Heterotetramer of two MnmE and two MnmG subunits. The cofactor is FAD.

The protein resides in the cytoplasm. NAD-binding protein involved in the addition of a carboxymethylaminomethyl (cmnm) group at the wobble position (U34) of certain tRNAs, forming tRNA-cmnm(5)s(2)U34. In Myxococcus xanthus (strain DK1622), this protein is tRNA uridine 5-carboxymethylaminomethyl modification enzyme MnmG.